Consider the following 70-residue polypeptide: ATP synthase subunit c (70 aa).

2 helical membrane passes run Ile4–Ile24 and Ile45–Phe65.

Belongs to the ATPase C chain family. F-type ATPases have 2 components, F(1) - the catalytic core - and F(0) - the membrane proton channel. F(1) has five subunits: alpha(3), beta(3), gamma(1), delta(1), epsilon(1). F(0) has three main subunits: a(1), b(2) and c(10-14). The alpha and beta chains form an alternating ring which encloses part of the gamma chain. F(1) is attached to F(0) by a central stalk formed by the gamma and epsilon chains, while a peripheral stalk is formed by the delta and b chains.

It is found in the cell membrane. F(1)F(0) ATP synthase produces ATP from ADP in the presence of a proton or sodium gradient. F-type ATPases consist of two structural domains, F(1) containing the extramembraneous catalytic core and F(0) containing the membrane proton channel, linked together by a central stalk and a peripheral stalk. During catalysis, ATP synthesis in the catalytic domain of F(1) is coupled via a rotary mechanism of the central stalk subunits to proton translocation. Its function is as follows. Key component of the F(0) channel; it plays a direct role in translocation across the membrane. A homomeric c-ring of between 10-14 subunits forms the central stalk rotor element with the F(1) delta and epsilon subunits. This Staphylococcus haemolyticus (strain JCSC1435) protein is ATP synthase subunit c.